The sequence spans 305 residues: Methionyl-tRNA formyltransferase (305 aa).

111-114 contributes to the (6S)-5,6,7,8-tetrahydrofolate binding site; sequence SLLP.

Belongs to the Fmt family.

The enzyme catalyses L-methionyl-tRNA(fMet) + (6R)-10-formyltetrahydrofolate = N-formyl-L-methionyl-tRNA(fMet) + (6S)-5,6,7,8-tetrahydrofolate + H(+). In terms of biological role, attaches a formyl group to the free amino group of methionyl-tRNA(fMet). The formyl group appears to play a dual role in the initiator identity of N-formylmethionyl-tRNA by promoting its recognition by IF2 and preventing the misappropriation of this tRNA by the elongation apparatus. The polypeptide is Methionyl-tRNA formyltransferase (Campylobacter jejuni subsp. doylei (strain ATCC BAA-1458 / RM4099 / 269.97)).